Reading from the N-terminus, the 827-residue chain is ADP-ribosylation factor GTPase-activating protein AGD3 (827 aa).

Positions methionine 1–glutamine 225 constitute a BAR domain. 2 coiled-coil regions span residues histidine 116–phenylalanine 139 and alanine 223–arginine 253. The disordered stretch occupies residues arginine 246 to glutamine 269. The span at glycine 255–glycine 267 shows a compositional bias: low complexity. Residues glutamine 292 to alanine 430 form the PH domain. The interval glutamate 439–aspartate 467 is disordered. Position 445 is a phosphoserine (serine 445). Positions glutamate 501 to aspartate 643 constitute an Arf-GAP domain. A C4-type zinc finger spans residues cysteine 516–cysteine 539. ANK repeat units lie at residues glycine 728–alanine 757, serine 761–alanine 790, and glutamate 794–arginine 825.

Homodimer. Interacts with DRP1A. Interacts with VAB. As to expression, broadly expressed. Detected in developing veins of the leaf and root. Detected in roots, hypocotyls, cotyledons, leaves, siliques and shoot apical meristems.

It is found in the golgi apparatus. The protein resides in the trans-Golgi network. With respect to regulation, ARF GAP activity strongly enhanced by phosphatidylinositol 4-monophosphate (PIP) and moderately enhanced by phosphatidylinositol 4,5-bisphosphate (PIP2). In terms of biological role, GTPase-activating protein (GAP) for ADP ribosylation factor (ARF). Involved in the spatial control of provascular differentiation. Required for the formation of the normal pattern of continuous secondary veins. Involved in auxin signaling but not in polar auxin transport or in auxin responses. Required for PIN1 internalization in roots. In Arabidopsis thaliana (Mouse-ear cress), this protein is ADP-ribosylation factor GTPase-activating protein AGD3 (AGD3).